The primary structure comprises 115 residues: MRIYVNEIKIKDDGIYCYSEDPTDGLVEVGQMLVDSDNYGFAYLLDDGQSYDYLIFVQETWSMLHENRGKKLIVNDDLVLEHFQEELDYILENVEGNNNYGKEFVSAVEETFDLK.

This sequence belongs to the UPF0738 family.

This Staphylococcus haemolyticus (strain JCSC1435) protein is UPF0738 protein SH1953.